Reading from the N-terminus, the 381-residue chain is Alkanesulfonate monooxygenase (381 aa).

Belongs to the SsuD family. In terms of assembly, homotetramer.

It carries out the reaction an alkanesulfonate + FMNH2 + O2 = an aldehyde + FMN + sulfite + H2O + 2 H(+). In terms of biological role, catalyzes the desulfonation of aliphatic sulfonates. The protein is Alkanesulfonate monooxygenase of Escherichia coli O157:H7.